The chain runs to 329 residues: Taste receptor type 2 member 102 (329 aa).

At 1 to 9 the chain is on the extracellular side; that stretch reads MNMESVLHN. The helical transmembrane segment at 10-30 threads the bilayer; that stretch reads FATVLIYVEFIFGNLSNGFIV. Topologically, residues 31 to 47 are cytoplasmic; it reads LSNFLDWVIKQKLSLID. Residues 48–68 form a helical membrane-spanning segment; sequence KILLTLAISRITLIWEIYAWF. At 69-85 the chain is on the extracellular side; sequence KSLYDPSSFLIGIEFQI. Residues 86–108 traverse the membrane as a helical segment; that stretch reads IYFSWVLSSHFSLWLATTLSVFY. Residues 109–129 lie on the Cytoplasmic side of the membrane; that stretch reads LLRIANCSWQIFLYLKWRLKQ. The chain crosses the membrane as a helical span at residues 130–150; sequence LIVGMLLGSLVFLLGNLMQSM. Over 151–181 the chain is Extracellular; that stretch reads LEERFYQYGRNTSVNTMSNDLAMWTELIFFN. A glycan (N-linked (GlcNAc...) asparagine) is linked at N161. The helical transmembrane segment at 182-202 threads the bilayer; it reads MAMFSVIPFTLALISFLLLIF. Topologically, residues 203–231 are cytoplasmic; it reads SLWKHLQKMQLISRRHRDPSTKAHMNALR. Residues 232–252 form a helical membrane-spanning segment; sequence IMVSFLLLYTMHFLSLLISWI. The Extracellular portion of the chain corresponds to 253–262; that stretch reads AQKHQSELAD. A helical membrane pass occupies residues 263 to 283; that stretch reads IIGMITELMYPSVHSCILILG. Over 284–329 the chain is Cytoplasmic; the sequence is NSKLKQTSLCMLRHLRCRLKGENITIAYSNQITSFCVFCVANKSMR.

It belongs to the G-protein coupled receptor T2R family.

It is found in the membrane. Putative taste receptor which may play a role in the perception of bitterness. This chain is Taste receptor type 2 member 102, found in Mus musculus (Mouse).